A 301-amino-acid polypeptide reads, in one-letter code: Large ribosomal subunit protein uL4 (301 aa).

Positions 1–223 (MNETKTIDVL…TQALSAQPEV (223 aa)) are large ribosomal subunit protein uL4. The interval 49 to 105 (QGTHATKTRGQVSGGGKKPWRQKGTGRARQGSTRAPQWVGGGTVHGPQPRSYAQRTP) is disordered. The unknown stretch occupies residues 224–301 (PETNVADQHP…KSDSEKEDAK (78 aa)).

This sequence belongs to the universal ribosomal protein uL4 family. As to quaternary structure, part of the 50S ribosomal subunit.

One of the primary rRNA binding proteins, this protein initially binds near the 5'-end of the 23S rRNA. It is important during the early stages of 50S assembly. It makes multiple contacts with different domains of the 23S rRNA in the assembled 50S subunit and ribosome. Its function is as follows. Forms part of the polypeptide exit tunnel. The polypeptide is Large ribosomal subunit protein uL4 (Cutibacterium acnes (strain DSM 16379 / KPA171202) (Propionibacterium acnes)).